The following is a 158-amino-acid chain: MSDKTYLTKGGYNKLKDELDDLKTNVRQQVLEKITEAKSHGDLSENAEYEAAKEEQAQVESRISTLERVLSTATILDEKDIKTDKVYILTTVLLKDLDRDEEVEYTLVSSEEADSENGKISVKSPIGKNLLGKSVGEIVEIKVPKGIMRYEVLNIKVK.

Residues 8 to 74 (TKGGYNKLKD…TLERVLSTAT (67 aa)) are a coiled coil.

It belongs to the GreA/GreB family.

In terms of biological role, necessary for efficient RNA polymerase transcription elongation past template-encoded arresting sites. The arresting sites in DNA have the property of trapping a certain fraction of elongating RNA polymerases that pass through, resulting in locked ternary complexes. Cleavage of the nascent transcript by cleavage factors such as GreA or GreB allows the resumption of elongation from the new 3'terminus. GreA releases sequences of 2 to 3 nucleotides. The chain is Transcription elongation factor GreA from Chloroherpeton thalassium (strain ATCC 35110 / GB-78).